A 438-amino-acid polypeptide reads, in one-letter code: tRNA modification GTPase MnmE (438 aa).

Residues arginine 20, glutamate 78, and lysine 117 each coordinate (6S)-5-formyl-5,6,7,8-tetrahydrofolate. One can recognise a TrmE-type G domain in the interval 214–359 (GIRVLIIGKP…LIDEIKKLFY (146 aa)). Asparagine 224 provides a ligand contact to K(+). GTP is bound by residues 224–229 (NVGKST), 243–249 (TDIPGTT), and 268–271 (DTAG). Serine 228 contacts Mg(2+). Residues threonine 243, isoleucine 245, and threonine 248 each coordinate K(+). Threonine 249 is a Mg(2+) binding site. Lysine 438 is a (6S)-5-formyl-5,6,7,8-tetrahydrofolate binding site.

It belongs to the TRAFAC class TrmE-Era-EngA-EngB-Septin-like GTPase superfamily. TrmE GTPase family. As to quaternary structure, homodimer. Heterotetramer of two MnmE and two MnmG subunits. K(+) serves as cofactor.

The protein resides in the cytoplasm. Exhibits a very high intrinsic GTPase hydrolysis rate. Involved in the addition of a carboxymethylaminomethyl (cmnm) group at the wobble position (U34) of certain tRNAs, forming tRNA-cmnm(5)s(2)U34. This chain is tRNA modification GTPase MnmE, found in Ureaplasma parvum serovar 3 (strain ATCC 27815 / 27 / NCTC 11736).